The primary structure comprises 65 residues: UPF0434 protein Rpal_0270 (65 aa).

It belongs to the UPF0434 family.

The polypeptide is UPF0434 protein Rpal_0270 (Rhodopseudomonas palustris (strain TIE-1)).